The chain runs to 296 residues: Claudin-23 (296 aa).

Over 1–2 (MR) the chain is Cytoplasmic. Residues 3–23 (TPVVMTLGMVLTPCGLLLNLV) traverse the membrane as a helical segment. Over 24 to 81 (STLAPGWRLVKGFLDQPVDVVLYQGLWDICREQSSRERECGQPDEWNYFQTQPVQVAR) the chain is Extracellular. Residues 82–102 (GLMITSLATTALGLLLASLGV) traverse the membrane as a helical segment. Residues 103–111 (RCWQDEPHY) are Cytoplasmic-facing. A helical transmembrane segment spans residues 112–132 (GLAGLSGVVFFVAGLFSLIPV). Over 133–160 (SWYNHFLSDPDVLAAPSSPVTVQVSYSL) the chain is Extracellular. A helical membrane pass occupies residues 161–181 (VLGYLGSCLLLLGGFSLALSF). The Cytoplasmic segment spans residues 182 to 296 (APWCEERCRR…QNSLPCDSDL (115 aa)). A disordered region spans residues 224–296 (YSDGQHRPPP…QNSLPCDSDL (73 aa)). The segment covering 273–284 (TSQGGSSSRSTR) has biased composition (low complexity). Residues 285–296 (PCQNSLPCDSDL) are compositionally biased toward polar residues.

It belongs to the claudin family.

It is found in the cell junction. It localises to the tight junction. The protein localises to the cell membrane. Its function is as follows. Plays a major role in tight junction-specific obliteration of the intercellular space, through calcium-independent cell-adhesion activity. The sequence is that of Claudin-23 (Cldn23) from Mus musculus (Mouse).